Reading from the N-terminus, the 84-residue chain is Small ribosomal subunit protein bS16 (84 aa).

Belongs to the bacterial ribosomal protein bS16 family.

This is Small ribosomal subunit protein bS16 from Cupriavidus pinatubonensis (strain JMP 134 / LMG 1197) (Cupriavidus necator (strain JMP 134)).